Reading from the N-terminus, the 393-residue chain is Formate-dependent phosphoribosylglycinamide formyltransferase (393 aa).

N(1)-(5-phospho-beta-D-ribosyl)glycinamide contacts are provided by residues 22-23 (EL) and glutamate 82. ATP contacts are provided by residues arginine 114, lysine 155, 160-165 (SSGKGQ), 195-198 (EGFV), and glutamate 203. In terms of domain architecture, ATP-grasp spans 119 to 308 (RLAAEELGLP…EFALHARAIL (190 aa)). Residues glutamate 267 and glutamate 279 each contribute to the Mg(2+) site. Residues aspartate 286, lysine 356, and 363–364 (RR) each bind N(1)-(5-phospho-beta-D-ribosyl)glycinamide.

Belongs to the PurK/PurT family. As to quaternary structure, homodimer.

The catalysed reaction is N(1)-(5-phospho-beta-D-ribosyl)glycinamide + formate + ATP = N(2)-formyl-N(1)-(5-phospho-beta-D-ribosyl)glycinamide + ADP + phosphate + H(+). It functions in the pathway purine metabolism; IMP biosynthesis via de novo pathway; N(2)-formyl-N(1)-(5-phospho-D-ribosyl)glycinamide from N(1)-(5-phospho-D-ribosyl)glycinamide (formate route): step 1/1. Its function is as follows. Involved in the de novo purine biosynthesis. Catalyzes the transfer of formate to 5-phospho-ribosyl-glycinamide (GAR), producing 5-phospho-ribosyl-N-formylglycinamide (FGAR). Formate is provided by PurU via hydrolysis of 10-formyl-tetrahydrofolate. The protein is Formate-dependent phosphoribosylglycinamide formyltransferase of Nitratidesulfovibrio vulgaris (strain DSM 19637 / Miyazaki F) (Desulfovibrio vulgaris).